We begin with the raw amino-acid sequence, 332 residues long: Ketol-acid reductoisomerase (NADP(+)) 2 (332 aa).

The KARI N-terminal Rossmann domain maps to 2 to 182 (AELFYDADAD…GGTRAGVIRT (181 aa)). Residues 25–28 (YGSQ), S51, S53, and 83–86 (DPIQ) each bind NADP(+). H108 is a catalytic residue. G134 contacts NADP(+). The region spanning 183–328 (TFTEETETDL…KELRKLMSWV (146 aa)) is the KARI C-terminal knotted domain. Mg(2+) contacts are provided by D191, E195, E227, and E231. Residue S252 coordinates substrate.

The protein belongs to the ketol-acid reductoisomerase family. It depends on Mg(2+) as a cofactor.

It catalyses the reaction (2R)-2,3-dihydroxy-3-methylbutanoate + NADP(+) = (2S)-2-acetolactate + NADPH + H(+). It carries out the reaction (2R,3R)-2,3-dihydroxy-3-methylpentanoate + NADP(+) = (S)-2-ethyl-2-hydroxy-3-oxobutanoate + NADPH + H(+). The protein operates within amino-acid biosynthesis; L-isoleucine biosynthesis; L-isoleucine from 2-oxobutanoate: step 2/4. It functions in the pathway amino-acid biosynthesis; L-valine biosynthesis; L-valine from pyruvate: step 2/4. In terms of biological role, involved in the biosynthesis of branched-chain amino acids (BCAA). Catalyzes an alkyl-migration followed by a ketol-acid reduction of (S)-2-acetolactate (S2AL) to yield (R)-2,3-dihydroxy-isovalerate. In the isomerase reaction, S2AL is rearranged via a Mg-dependent methyl migration to produce 3-hydroxy-3-methyl-2-ketobutyrate (HMKB). In the reductase reaction, this 2-ketoacid undergoes a metal-dependent reduction by NADPH to yield (R)-2,3-dihydroxy-isovalerate. The chain is Ketol-acid reductoisomerase (NADP(+)) 2 from Streptomyces coelicolor (strain ATCC BAA-471 / A3(2) / M145).